A 299-amino-acid chain; its full sequence is Large ribosomal subunit protein uL29m (299 aa).

This sequence belongs to the universal ribosomal protein uL29 family. Component of the mitochondrial large ribosomal subunit. Mature mitochondrial ribosomes consist of a small (37S) and a large (54S) subunit. The 37S subunit contains at least 33 different proteins and 1 molecule of RNA (15S). The 54S subunit contains at least 45 different proteins and 1 molecule of RNA (21S).

It is found in the mitochondrion. This is Large ribosomal subunit protein uL29m (MRPL4) from Scheffersomyces stipitis (strain ATCC 58785 / CBS 6054 / NBRC 10063 / NRRL Y-11545) (Yeast).